A 201-amino-acid chain; its full sequence is Small ribosomal subunit protein uS4 (201 aa).

The interval 26 to 45 (FEKRNYPPGQHGNNRRRGKK) is disordered. The S4 RNA-binding domain occupies 93 to 153 (SRLDNVVYRM…EKSKSLAVVQ (61 aa)).

Belongs to the universal ribosomal protein uS4 family. In terms of assembly, part of the 30S ribosomal subunit. Contacts protein S5. The interaction surface between S4 and S5 is involved in control of translational fidelity.

Its function is as follows. One of the primary rRNA binding proteins, it binds directly to 16S rRNA where it nucleates assembly of the body of the 30S subunit. With S5 and S12 plays an important role in translational accuracy. In Christiangramia forsetii (strain DSM 17595 / CGMCC 1.15422 / KT0803) (Gramella forsetii), this protein is Small ribosomal subunit protein uS4.